The following is a 185-amino-acid chain: uncharacterized protein (185 aa).

Component of the acid-insoluble and acid-soluble organic matrix of calcified layers of the shell (at protein level).

The protein localises to the secreted. This is an uncharacterized protein from Lottia gigantea (Giant owl limpet).